We begin with the raw amino-acid sequence, 210 residues long: Redox-sensing transcriptional repressor Rex (210 aa).

Positions 17 to 56 form a DNA-binding region, H-T-H motif; the sequence is SYLHLVKKAEADKLEYISGTVIAEELELEPIQVRKDLTIT. Position 91–96 (91–96) interacts with NAD(+); that stretch reads GAGSLG.

This sequence belongs to the transcriptional regulatory Rex family. As to quaternary structure, homodimer.

Its subcellular location is the cytoplasm. Its function is as follows. Modulates transcription in response to changes in cellular NADH/NAD(+) redox state. This Treponema denticola (strain ATCC 35405 / DSM 14222 / CIP 103919 / JCM 8153 / KCTC 15104) protein is Redox-sensing transcriptional repressor Rex.